Here is a 146-residue protein sequence, read N- to C-terminus: Coactosin (146 aa).

The ADF-H domain occupies 1–132 (MADVSSTELK…NEEELMTKVR (132 aa)).

This sequence belongs to the actin-binding proteins ADF family. Coactosin subfamily. The N-terminus is blocked.

The protein localises to the cytoplasm. The protein resides in the cytoskeleton. Its function is as follows. Binds to F-actin in a calcium independent manner. Binds to the filaments along their length. This is Coactosin (coaA) from Dictyostelium discoideum (Social amoeba).